The primary structure comprises 206 residues: Ribosomal RNA large subunit methyltransferase E (206 aa).

S-adenosyl-L-methionine is bound by residues glycine 60, tryptophan 62, aspartate 80, aspartate 96, and aspartate 121. Lysine 161 functions as the Proton acceptor in the catalytic mechanism.

The protein belongs to the class I-like SAM-binding methyltransferase superfamily. RNA methyltransferase RlmE family.

The protein localises to the cytoplasm. It carries out the reaction uridine(2552) in 23S rRNA + S-adenosyl-L-methionine = 2'-O-methyluridine(2552) in 23S rRNA + S-adenosyl-L-homocysteine + H(+). Its function is as follows. Specifically methylates the uridine in position 2552 of 23S rRNA at the 2'-O position of the ribose in the fully assembled 50S ribosomal subunit. The sequence is that of Ribosomal RNA large subunit methyltransferase E from Legionella pneumophila (strain Paris).